Reading from the N-terminus, the 137-residue chain is Peptide methionine sulfoxide reductase MsrB (137 aa).

The MsrB domain maps to 7 to 129 (AEELKKNLSE…NSASLRFTDG (123 aa)). 4 residues coordinate Zn(2+): Cys-46, Cys-49, Cys-95, and Cys-98. The active-site Nucleophile is the Cys-118.

The protein belongs to the MsrB Met sulfoxide reductase family. It depends on Zn(2+) as a cofactor.

The enzyme catalyses L-methionyl-[protein] + [thioredoxin]-disulfide + H2O = L-methionyl-(R)-S-oxide-[protein] + [thioredoxin]-dithiol. This chain is Peptide methionine sulfoxide reductase MsrB, found in Escherichia coli O8 (strain IAI1).